Consider the following 85-residue polypeptide: Small ribosomal subunit protein bS16 (85 aa).

The protein belongs to the bacterial ribosomal protein bS16 family.

The chain is Small ribosomal subunit protein bS16 from Xanthomonas euvesicatoria pv. vesicatoria (strain 85-10) (Xanthomonas campestris pv. vesicatoria).